Reading from the N-terminus, the 755-residue chain is Photosystem I P700 chlorophyll a apoprotein A1 (755 aa).

The next 8 membrane-spanning stretches (helical) occupy residues 72–95 (IFSA…FHGA), 158–181 (LYCT…FHYH), 197–221 (LNHH…HVSL), 297–315 (TAHH…GHMY), 352–375 (WHAQ…QHMY), 391–417 (LSLF…IFMV), 439–461 (AIIS…LYVH), and 536–554 (FMVH…LILL). [4Fe-4S] cluster is bound by residues Cys-578 and Cys-587. The next 2 membrane-spanning stretches (helical) occupy residues 594 to 615 (HVFL…HFSW) and 669 to 691 (LSAY…MFLF). His-680 is a chlorophyll a' binding site. Positions 688 and 696 each coordinate chlorophyll a. Trp-697 is a phylloquinone binding site. A helical membrane pass occupies residues 729 to 749 (AVGVAHYLLGGIATTWAFFLA).

This sequence belongs to the PsaA/PsaB family. As to quaternary structure, the PsaA/B heterodimer binds the P700 chlorophyll special pair and subsequent electron acceptors. PSI consists of a core antenna complex that captures photons, and an electron transfer chain that converts photonic excitation into a charge separation. The cyanobacterial PSI reaction center is composed of one copy each of PsaA,B,C,D,E,F,I,J,K,L,M and X, and forms trimeric complexes. It depends on PSI electron transfer chain: 5 chlorophyll a, 1 chlorophyll a', 2 phylloquinones and 3 4Fe-4S clusters. PSI core antenna: 90 chlorophyll a, 22 carotenoids, 3 phospholipids and 1 galactolipid. P700 is a chlorophyll a/chlorophyll a' dimer, A0 is one or more chlorophyll a, A1 is one or both phylloquinones and FX is a shared 4Fe-4S iron-sulfur center. as a cofactor.

The protein localises to the cellular thylakoid membrane. It carries out the reaction reduced [plastocyanin] + hnu + oxidized [2Fe-2S]-[ferredoxin] = oxidized [plastocyanin] + reduced [2Fe-2S]-[ferredoxin]. Its function is as follows. PsaA and PsaB bind P700, the primary electron donor of photosystem I (PSI), as well as the electron acceptors A0, A1 and FX. PSI is a plastocyanin/cytochrome c6-ferredoxin oxidoreductase, converting photonic excitation into a charge separation, which transfers an electron from the donor P700 chlorophyll pair to the spectroscopically characterized acceptors A0, A1, FX, FA and FB in turn. Oxidized P700 is reduced on the lumenal side of the thylakoid membrane by plastocyanin or cytochrome c6. The sequence is that of Photosystem I P700 chlorophyll a apoprotein A1 from Thermostichus vulcanus (Synechococcus vulcanus).